A 218-amino-acid chain; its full sequence is Glutathione S-transferase Mu 2 (218 aa).

Positions 2–88 (PMTLGYWNIR…YIARKHNLCG (87 aa)) constitute a GST N-terminal domain. Position 7–8 (7–8 (YW)) interacts with glutathione. Phosphoserine is present on residues S27 and S44. Residues 43 to 46 (RSQW), K50, 59 to 60 (NL), and 72 to 73 (QS) each bind glutathione. The GST C-terminal domain maps to 90–208 (SEKEQIREDI…KSSRFLPRPV (119 aa)). Y116 is a binding site for substrate.

It belongs to the GST superfamily. Mu family. In terms of assembly, homodimer. In terms of tissue distribution, muscle.

The protein localises to the cytoplasm. It catalyses the reaction RX + glutathione = an S-substituted glutathione + a halide anion + H(+). It carries out the reaction 11(S)-hydroxy-14(S),15(S)-epoxy-(5Z,8Z,12E)-eicosatrienoate + glutathione = (11S,15S)-dihydroxy-14(R)-S-glutathionyl-(5Z,8Z,12E)-eicosatrienoate. In terms of biological role, conjugation of reduced glutathione to a wide number of exogenous and endogenous hydrophobic electrophiles. Participates in the formation of novel hepoxilin regioisomers. This chain is Glutathione S-transferase Mu 2, found in Homo sapiens (Human).